The primary structure comprises 291 residues: Pirin-like protein (291 aa).

This sequence belongs to the pirin family.

The protein localises to the nucleus. The protein is Pirin-like protein of Solanum lycopersicum (Tomato).